Consider the following 111-residue polypeptide: Large ribosomal subunit protein uL23 (111 aa).

The protein belongs to the universal ribosomal protein uL23 family. In terms of assembly, part of the 50S ribosomal subunit. Contacts protein L29, and trigger factor when it is bound to the ribosome.

One of the early assembly proteins it binds 23S rRNA. One of the proteins that surrounds the polypeptide exit tunnel on the outside of the ribosome. Forms the main docking site for trigger factor binding to the ribosome. This is Large ribosomal subunit protein uL23 from Nitrosomonas eutropha (strain DSM 101675 / C91 / Nm57).